Here is a 170-residue protein sequence, read N- to C-terminus: Ribosome maturation factor RimM (170 aa).

The PRC barrel domain maps to 97–170 (HPDEYYWVDL…RIVVDWDPEF (74 aa)).

Belongs to the RimM family. As to quaternary structure, binds ribosomal protein uS19.

Its subcellular location is the cytoplasm. Its function is as follows. An accessory protein needed during the final step in the assembly of 30S ribosomal subunit, possibly for assembly of the head region. Essential for efficient processing of 16S rRNA. May be needed both before and after RbfA during the maturation of 16S rRNA. It has affinity for free ribosomal 30S subunits but not for 70S ribosomes. The chain is Ribosome maturation factor RimM from Xylella fastidiosa (strain M12).